A 345-amino-acid polypeptide reads, in one-letter code: Phosphate acyltransferase (345 aa).

It belongs to the PlsX family. Homodimer. Probably interacts with PlsY.

Its subcellular location is the cytoplasm. It carries out the reaction a fatty acyl-[ACP] + phosphate = an acyl phosphate + holo-[ACP]. It participates in lipid metabolism; phospholipid metabolism. Its function is as follows. Catalyzes the reversible formation of acyl-phosphate (acyl-PO(4)) from acyl-[acyl-carrier-protein] (acyl-ACP). This enzyme utilizes acyl-ACP as fatty acyl donor, but not acyl-CoA. The sequence is that of Phosphate acyltransferase from Dichelobacter nodosus (strain VCS1703A).